We begin with the raw amino-acid sequence, 462 residues long: WD repeat-containing protein WRAP73 (462 aa).

WD repeat units lie at residues 46 to 86 (TCLD…WHCK), 89 to 129 (EGSA…VSYI), 176 to 210 (TDTQDLTGIEWAPNGCVLAAWDTCLEYKVLLYSLD), and 221 to 260 (EWSLGIKSVAWSPSSQFLAIGSYDGKVRLLNHVTWKMITE). Serine 281 bears the Phosphoserine mark. 2 WD repeats span residues 328-369 (NPRM…LFVV) and 371-410 (EHMSPVRSFQWDPQQPRLAICTGGSKVYLWSPAGCVSVQV).

In terms of assembly, interacts with SSX2IP. As to expression, ubiquitous.

It is found in the cytoplasm. The protein localises to the cytoskeleton. The protein resides in the microtubule organizing center. It localises to the centrosome. Its function is as follows. The SSX2IP:WRAP73 complex is proposed to act as regulator of spindle anchoring at the mitotic centrosome. Required for the centrosomal localization of SSX2IP and normal mitotic bipolar spindle morphology. Required for the targeting of centriole satellite proteins to centrosomes such as of PCM1, SSX2IP, CEP290 and PIBF1/CEP90. Required for ciliogenesis and involved in the removal of the CEP97:CCP110 complex from the mother centriole. Involved in ciliary vesicle formation at the mother centriole and required for the docking of vesicles to the basal body during ciliogenesis; may promote docking of RAB8A- and ARL13B-containing vesicles. The sequence is that of WD repeat-containing protein WRAP73 (Wrap73) from Mus musculus (Mouse).